The primary structure comprises 862 residues: Protein translocase subunit SecA (862 aa).

ATP contacts are provided by residues glutamine 88, 106–110 (GEGKT), and aspartate 506. The Zn(2+) site is built by cysteine 839, cysteine 841, cysteine 850, and histidine 851.

It belongs to the SecA family. As to quaternary structure, monomer and homodimer. Part of the essential Sec protein translocation apparatus which comprises SecA, SecYEG and auxiliary proteins SecDF-YajC and YidC. Zn(2+) is required as a cofactor.

The protein resides in the cell inner membrane. It is found in the cytoplasm. The catalysed reaction is ATP + H2O + cellular proteinSide 1 = ADP + phosphate + cellular proteinSide 2.. Functionally, part of the Sec protein translocase complex. Interacts with the SecYEG preprotein conducting channel. Has a central role in coupling the hydrolysis of ATP to the transfer of proteins into and across the cell membrane, serving as an ATP-driven molecular motor driving the stepwise translocation of polypeptide chains across the membrane. The protein is Protein translocase subunit SecA of Campylobacter jejuni subsp. jejuni serotype O:2 (strain ATCC 700819 / NCTC 11168).